The following is a 291-amino-acid chain: tRNA U34 carboxymethyltransferase (291 aa).

Residues Lys-61, Trp-75, Lys-80, Gly-100, 122 to 124 (DPS), 149 to 150 (VE), Tyr-169, and Arg-284 each bind carboxy-S-adenosyl-L-methionine.

This sequence belongs to the class I-like SAM-binding methyltransferase superfamily. CmoB family. In terms of assembly, homotetramer.

It carries out the reaction carboxy-S-adenosyl-L-methionine + 5-hydroxyuridine(34) in tRNA = 5-carboxymethoxyuridine(34) in tRNA + S-adenosyl-L-homocysteine + H(+). Its function is as follows. Catalyzes carboxymethyl transfer from carboxy-S-adenosyl-L-methionine (Cx-SAM) to 5-hydroxyuridine (ho5U) to form 5-carboxymethoxyuridine (cmo5U) at position 34 in tRNAs. The chain is tRNA U34 carboxymethyltransferase from Campylobacter jejuni subsp. jejuni serotype O:6 (strain 81116 / NCTC 11828).